The sequence spans 161 residues: Glycine cleavage system H protein 2 (161 aa).

Positions 34-116 (TVTVGVTDIG…YGEGWIAKLK (83 aa)) constitute a Lipoyl-binding domain. An N6-lipoyllysine modification is found at Lys75.

It belongs to the GcvH family. As to quaternary structure, the glycine cleavage system is composed of four proteins: P, T, L and H. (R)-lipoate is required as a cofactor.

In terms of biological role, the glycine cleavage system catalyzes the degradation of glycine. The H protein shuttles the methylamine group of glycine from the P protein to the T protein. The polypeptide is Glycine cleavage system H protein 2 (Aquifex aeolicus (strain VF5)).